The chain runs to 128 residues: Entry-fusion complex protein OPG094 (128 aa).

At 1 to 30 (MENVPNVYFNPVFIEPTFKHSLLSVYKHRL) the chain is on the intravirion side. A helical; Signal-anchor for type III membrane protein transmembrane segment spans residues 31–51 (IVLFEVFIVFILIYVFFRSEL). The Virion surface segment spans residues 52 to 107 (NMFFMPKRKIPDPIDRLRRANLACEDDKLMIYGLPWMTTQTSALSINSKPIVYKDC). A disulfide bridge links cysteine 75 with cysteine 107.

It belongs to the orthopoxvirus OPG099 family. As to quaternary structure, interacts with OPG086. Component of the entry fusion complex (EFC) composed of OPG053, OPG076, OPG086, OPG094, OPG095, OPG099, OPG107, OPG143, OPG104J5, OPG147 and OPG155. Except for OPG095 and OPG053, each of the EFC proteins is required for assembly or stability of the complex. Post-translationally, most cysteines are linked by disulfide bonds. They are created by the viral disulfide bond formation pathway, a poxvirus-specific redox pathway that operates on the cytoplasmic side of the MV membranes. In terms of processing, unglycosylated because produced in viral factories instead of the classic ER -Golgi route.

The protein localises to the virion membrane. Component of the entry fusion complex (EFC), which consists of 11 proteins. During cell infection, this complex mediates entry of the virion core into the host cytoplasm by a two-step mechanism consisting of lipid mixing of the viral and cellular membranes and subsequent pore formation. The chain is Entry-fusion complex protein OPG094 (OPG099) from Vaccinia virus (strain Ankara) (VACV).